The chain runs to 752 residues: BCLAF1 and THRAP3 family member 3 (752 aa).

Residues 1-13 (MARSRSRSPRWKQ) show a composition bias toward basic residues. Disordered stretches follow at residues 1-114 (MARS…YMPT), 132-177 (PTVQ…QMSL), and 190-252 (DELR…DPAR). Phosphoserine occurs at positions 15 and 17. Basic and acidic residues predominate over residues 23-57 (FEYHEERHFHGHYDPEYRHDQQRPFTWRMDDEKHG). Residues Ser78 and Ser80 each carry the phosphoserine modification. Residues 85 to 109 (PVEKFDTYKPHQEYFPGRGDDDRRS) are compositionally biased toward basic and acidic residues. The span at 190-199 (DELRHQRVQE) shows a compositional bias: basic and acidic residues. Residue Ser205 is modified to Phosphoserine. 2 stretches are compositionally biased toward basic and acidic residues: residues 222–231 (RYPEDHDFRK) and 238–252 (RPTD…DPAR). Lys416 is covalently cross-linked (Glycyl lysine isopeptide (Lys-Gly) (interchain with G-Cter in SUMO2)). Residue Ser592 is modified to Phosphoserine.

This sequence belongs to the BCLAF1/THRAP3 family.

It localises to the mitochondrion. The chain is BCLAF1 and THRAP3 family member 3 from Mus musculus (Mouse).